The primary structure comprises 472 residues: Eukaryotic translation initiation factor 2 subunit 3B (472 aa).

An N-acetylalanine modification is found at Ala-2. Ser-16 is subject to Phosphoserine. A tr-type G domain is found at 39–248 (QATINIGTIG…IVKKIPVPPR (210 aa)). Residues 48 to 55 (GHVAHGKS) are G1. 51–56 (AHGKST) contacts GTP. Residues 76-80 (NITIK) are G2. The tract at residues 134–137 (DCPG) is G3. Residues 190–193 (NKID) and 225–227 (SAQ) contribute to the GTP site. Positions 190-193 (NKID) are G4. The tract at residues 225–227 (SAQ) is G5.

This sequence belongs to the TRAFAC class translation factor GTPase superfamily. Classic translation factor GTPase family. EIF2G subfamily. As to quaternary structure, eIF2 is a heterotrimer composed of an alpha, a beta and a gamma chain. eIF2 is member of the 43S pre-initiation complex (43S PIC). In terms of tissue distribution, specifically expressed in testis at the mRNA level.

It carries out the reaction GTP + H2O = GDP + phosphate + H(+). In terms of biological role, member of the eIF2 complex that functions in the early steps of protein synthesis by forming a ternary complex with GTP and initiator tRNA. This complex binds to a 40S ribosomal subunit, followed by mRNA binding to form the 43S pre-initiation complex (43S PIC). Junction of the 60S ribosomal subunit to form the 80S initiation complex is preceded by hydrolysis of the GTP bound to eIF2 and release of an eIF2-GDP binary complex. In order for eIF2 to recycle and catalyze another round of initiation, the GDP bound to eIF2 must exchange with GTP by way of a reaction catalyzed by eIF-2B. This chain is Eukaryotic translation initiation factor 2 subunit 3B, found in Homo sapiens (Human).